Reading from the N-terminus, the 107-residue chain is Phosphoribosyl-ATP pyrophosphatase (107 aa).

It belongs to the PRA-PH family.

Its subcellular location is the cytoplasm. It catalyses the reaction 1-(5-phospho-beta-D-ribosyl)-ATP + H2O = 1-(5-phospho-beta-D-ribosyl)-5'-AMP + diphosphate + H(+). It participates in amino-acid biosynthesis; L-histidine biosynthesis; L-histidine from 5-phospho-alpha-D-ribose 1-diphosphate: step 2/9. In Bacillus thuringiensis (strain Al Hakam), this protein is Phosphoribosyl-ATP pyrophosphatase.